A 329-amino-acid chain; its full sequence is MSAEASGPAPAAAECLESPSPSSVEPGSPSYSLKPLTPNSKYVKLNVGGSLHYTTLRTLTGQDTMLKAMFSGRVEVLTDAGGWVLIDRSGRHFGTILNYLRDGSVPLPESARELGELLGEARYYLVQGLIEDCQLALQQKREKLSPLCLIPTVTSPREEQQLLASTSKPVVKLLHNRSNNKYSYTSTSDDNLLKNIELFDKLALRFHGRLLFLKDVLGDEICCWSFYGQGRKIAEVCCTSIVYATEKKQTKVEFPEARIFEETLNILIYENSRGPDLALLEATGGAAGGGGAGRGDDEENREHRVRRIHVRRHITHDERPHGQQIVFKD.

Positions 1–31 are disordered; the sequence is MSAEASGPAPAAAECLESPSPSSVEPGSPSY. One can recognise a BTB domain in the interval 41 to 109; the sequence is KYVKLNVGGS…LRDGSVPLPE (69 aa).

Belongs to the BACURD family. In terms of assembly, homotetramer; forms a two-fold symmetric tetramer in solution. Interacts with CUL3; interaction is direct and forms a 5:5 heterodecamer. Component of the BCR(KCTD13) E3 ubiquitin ligase complex, at least composed of CUL3, KCTD13/BACURD1 and RBX1. Interacts with RHOA; with a preference for RhoA-GDP. Interacts with POLD2 and PCNA. Interacts with SPRTN.

The protein resides in the nucleus. Its pathway is protein modification; protein ubiquitination. Functionally, substrate-specific adapter of a BCR (BTB-CUL3-RBX1) E3 ubiquitin-protein ligase complex required for synaptic transmission. The BCR(KCTD13) E3 ubiquitin ligase complex mediates the ubiquitination of RHOA, leading to its degradation by the proteasome, thereby regulating the actin cytoskeleton and promoting synaptic transmission. This chain is BTB/POZ domain-containing adapter for CUL3-mediated RhoA degradation protein 1 (Kctd13), found in Mus musculus (Mouse).